The sequence spans 309 residues: Sulfate adenylyltransferase subunit 2 (309 aa).

It belongs to the PAPS reductase family. CysD subfamily. As to quaternary structure, heterodimer composed of CysD, the smaller subunit, and CysN.

The catalysed reaction is sulfate + ATP + H(+) = adenosine 5'-phosphosulfate + diphosphate. It functions in the pathway sulfur metabolism; hydrogen sulfide biosynthesis; sulfite from sulfate: step 1/3. Functionally, with CysN forms the ATP sulfurylase (ATPS) that catalyzes the adenylation of sulfate producing adenosine 5'-phosphosulfate (APS) and diphosphate, the first enzymatic step in sulfur assimilation pathway. APS synthesis involves the formation of a high-energy phosphoric-sulfuric acid anhydride bond driven by GTP hydrolysis by CysN coupled to ATP hydrolysis by CysD. The chain is Sulfate adenylyltransferase subunit 2 from Aeromonas salmonicida (strain A449).